A 279-amino-acid chain; its full sequence is DegV domain-containing protein SP_1112 (279 aa).

Residues 4–277 (IKIVTDSSVT…ENAWAILIRY (274 aa)) enclose the DegV domain. Thr62 and Ser94 together coordinate hexadecanoate.

May bind long-chain fatty acids, such as palmitate, and may play a role in lipid transport or fatty acid metabolism. This Streptococcus pneumoniae serotype 4 (strain ATCC BAA-334 / TIGR4) protein is DegV domain-containing protein SP_1112.